The primary structure comprises 649 residues: Quinol oxidase subunit 1 (649 aa).

Topologically, residues 1–15 are extracellular; sequence MKFKWDEFFVTGDPL. Residues 16–34 form a helical membrane-spanning segment; that stretch reads ILGAQVSIALSTIAIIFVL. The Cytoplasmic segment spans residues 35–56; sequence TYFKKWKWLWSEWITTVDHKKL. A helical transmembrane segment spans residues 57 to 75; the sequence is GIMYIISAVIMLFRGGVDG. The Extracellular segment spans residues 76–97; that stretch reads LMMRAQLALPNNSFLDSNHYNE. The helical transmembrane segment at 98-117 threads the bilayer; it reads IFTTHGTIMIIFMAMPFLIG. H102 contacts Fe(II)-heme a. Residues 118-139 lie on the Cytoplasmic side of the membrane; the sequence is LINVVVPLQIGARDVAFPYLNN. Residues 140-157 form a helical membrane-spanning segment; it reads LSFWTFFVGAMLFNISFV. Residues 158–190 are Extracellular-facing; that stretch reads IGGSPNAGWTSYMPLASNDMSPGPGENYYLLGL. A helical membrane pass occupies residues 191 to 209; sequence QIAGIGTLMTGINFMVTIL. The Cytoplasmic segment spans residues 210 to 227; it reads KMRTKGMTLMRMPMFTWT. Residues 228–246 form a helical membrane-spanning segment; sequence TLITMVIIVFAFPVLTVAL. The Extracellular segment spans residues 247–272; sequence ALLSFDRLFGAHFFTLEAGGMPMLWA. The helical transmembrane segment at 273-292 threads the bilayer; the sequence is NLFWIWGHPEVYIVILPAFG. Residues H280 and Y284 each coordinate Cu cation. The segment at residues 280–284 is a cross-link (1'-histidyl-3'-tyrosine (His-Tyr)); that stretch reads HPEVY. Topologically, residues 293–315 are cytoplasmic; sequence IFSEIISSFARKQLFGYKAMVGS. Residues 316-335 traverse the membrane as a helical segment; it reads IIAISVLSFLVWTHHFFTMG. Cu cation contacts are provided by H329 and H330. The Extracellular portion of the chain corresponds to 336-343; it reads NSASVNSF. The helical transmembrane segment at 344-362 threads the bilayer; it reads FSITTMAISIPTGVKIFNW. The Cytoplasmic segment spans residues 363–377; the sequence is LFTMYKGRISFTTPM. Residues 378–397 form a helical membrane-spanning segment; that stretch reads LWALAFIPNFVIGGVTGVML. Residues 398–405 lie on the Extracellular side of the membrane; that stretch reads AMAAADYQ. The helical transmembrane segment at 406 to 425 threads the bilayer; that stretch reads YHNTYFLVSHFHYVLIAGTV. H415 is a heme a3 binding site. H417 contacts Fe(II)-heme a. At 426–452 the chain is on the cytoplasmic side; the sequence is FACFAGFIFWYPKMFGHKLNERIGKWF. A helical membrane pass occupies residues 453–472; the sequence is FWIFMIGFNICFFPQYFLGL. Residues 473 to 490 are Extracellular-facing; it reads QGMPRRIYTYGPNDGWTT. A helical transmembrane segment spans residues 491–510; it reads LNFISTVGAFMMGVGFLILC. The Cytoplasmic portion of the chain corresponds to 511-584; it reads YNIYYSFRYS…SKFKKIHMPS (74 aa). The helical transmembrane segment at 585-604 threads the bilayer; it reads NSGRPFFMSVAFGLAGFGLV. Over 605 to 610 the chain is Extracellular; that stretch reads FEWYWM. The helical transmembrane segment at 611-631 threads the bilayer; that stretch reads GVVGLIGVLLCMVLRSFEYDN. The Cytoplasmic segment spans residues 632-649; it reads GYYISVDEIKETERKISE.

This sequence belongs to the heme-copper respiratory oxidase family. It depends on Cu cation as a cofactor. Ferriheme a serves as cofactor. Heme A3. is required as a cofactor.

It is found in the cell membrane. It catalyses the reaction 2 a quinol + O2 = 2 a quinone + 2 H2O. It functions in the pathway energy metabolism; oxidative phosphorylation. Functionally, catalyzes quinol oxidation with the concomitant reduction of oxygen to water. Major component for energy conversion during vegetative growth. The polypeptide is Quinol oxidase subunit 1 (qoxB) (Bacillus subtilis (strain 168)).